A 1213-amino-acid chain; its full sequence is MDLLGDQHFAAQQPPLFDATPSSLKEDAEELIAETIAAWDSIVSQIQTENATFQNTISPIIQDENVKSQKQRVLTFYSSTSPSKDLRDASTAVGRLFNDAEIELYSRQDMFERVDQVLQQQDKQVVASLDEESLYYIQKLHRRFHQNGCGIAEEGQRVTFKTKMKRLGHLVQQCNKNLNEDKSGVWLGLDELDGIPQSLISRLKQGDGENSDHLWLPTKVPFSSPAITNAKSEATRKRIYCAIQNRMEMNVPLFREIVLLRDETARLLGYADHATLKTADKMMQTPQAVEALLSEIRTAVAPLAAQDVEELLEIKRNEAESRGTTADELYFWDLAYYSARRGEAEKKISSSISEYFELNTTLAKLLSIIEHLFGTRFRRVNAAGRDEAAGSLIWHKDVQMYSVWNVDGPKEFLGLFLASSALVMNYVRPTDTRPTLLSLDEVRKLFHEIGHLLHSQWTQTKYAALHHVDRDFVEAPSMMLEQFFWVEQHIKDVSFHYSHIDSKMKDMWKATLVDQDDTNPPEKPAQLSDDVVFNLARANQSKAIQGQLKEVFFATYDMLVHKPASRAALEALNLTELFNKTRSDVYKVRGGEALGGGWEWGHGQTVFRNILNRYDAGYYSYLLGRVFAMDIFDTGFKEKTPSREAGRRYRDMVYRVGGRQAEMKTMTDYLGHEPSTHPYLAWLQVFACVVPRDMVPNTAQIGSITTETIVGLLSPVRMAVWGLLPIKWRMTRELSACKQRCLQEDGHLVALEVRLVHSRHTLAAAVGEQRVAAPGSTAYDAALRSYFSVQQAAMQPACVVLPQSDEDVSAAVRCLAQLHQGGGESCRFAVRSGGHTSWAGASNIQHGAVIDLGRSAPSSSRRTSRRSRSGWGPRGAMWVGGLTLGGGLSYTSPRYGWTCDAVSQFQIVLADGSVVAADSKERPSLFRALKGGSNNFGIVTRITFETFRQGPVWSGTVYSLSSTAEAAIDNFVAFNSATSYDEYASVMTSFVYNQARGLPVVANLLQYTKEVTGTPAAFEGFMAVPNIYSSTSVASTLATTQATAALNSGGVRSLTYAVTLVSTKEVIQAAYEKWSTSYPAIKDVRNIIFSLVLEPLPPAIYQRHATTNTLGLADRAGALVVAELSVSWADAGDDALVSSTARALVDDIVAAAKSLGGFDPYIFANYANKDQAQDVIRSYGAESVSFLMQVRHEVDPKGIFTHLVPGGYKIPEH.

His447 serves as a coordination point for Zn(2+). Glu448 is an active-site residue. Positions 451 and 454 each coordinate Zn(2+).

The protein belongs to the peptidase M3 family. As to quaternary structure, monomer. The cofactor is Zn(2+).

It functions in the pathway mycotoxin biosynthesis. Its function is as follows. Oligopeptidase; part of the gene cluster that mediates the biosynthesis of the phomopsins, a group of hexapeptide mycotoxins which infects lupins and causes lupinosis disease in livestock. Within the pathway, phomG and phomG' are probably involved in the processing of the phomA and phomA' precursors. The pathway starts with the processing of the precursor phomA by several endopeptidases including kexin proteases as well as the cluster-specific S41 family peptidase phomP1 and the oligopeptidase phomG to produce 10 identical copies of the hexapeptide Tyr-Val-Ile-Pro-Ile-Asp. After being excised from the precursor peptide, the core peptides are cyclized and modified post-translationally by enzymes encoded within the gene cluster. The timing and order of proteolysis of the phomA precursor and PTMs are still unknown. Two tyrosinase-like enzymes, phomQ1 and phomQ2, catalyze the chlorination and hydroxylation of Tyr, respectively. PhomYb, is proposed to be involved in the construction of the macrocyclic structure. The other 4 ustYa family proteins may be involved in PTMs that generate the unique structure of phomopsin A. PhomYa is required for the hydroxylation of C-beta of Tyr. PhomYc, phomYd, and phomYe are responsible for the biosynthesis of 2,3-dehydroisoleucine (dIle), 2,3-dehydroaspartic acid (dAsp), and 3,4-dehydroproline (dPro), respectively. While dIle formation by phomYc is indispensable for the installation of dAsp by phomYd, the order of the other PTMs have not been elucidated yet. Most of the biosynthetic enzymes likely have broad substrate specificity, and thus, there might be a metabolic grid from a precursor to phomopsin A. The enzyme(s) responsible for the biosynthesis of 3,4-dehydrovaline (dVal) have also not been identified yet. Finally, phomM acts as an S-adenosylmethionine-dependent alpha-N-methyltransferase that catalyzes two successive N-methylation reactions, converting N-desmethyl-phomopsin A to phomopsin A and phomopsin A further to an N,N-dimethylated congener called phomopsin E. This is Oligopeptidase PhomG' from Diaporthe leptostromiformis (Lupinosis disease fungus).